A 105-amino-acid polypeptide reads, in one-letter code: Nitrogenase-stabilizing/protective protein NifW 2 (105 aa).

This sequence belongs to the NifW family.

Functionally, may protect the nitrogenase Fe-Mo protein from oxidative damage. This is Nitrogenase-stabilizing/protective protein NifW 2 (nifW2) from Trichormus variabilis (strain ATCC 29413 / PCC 7937) (Anabaena variabilis).